A 424-amino-acid polypeptide reads, in one-letter code: UDP-N-acetylglucosamine 1-carboxyvinyltransferase (424 aa).

22–23 (KN) lines the phosphoenolpyruvate pocket. Position 96 (R96) interacts with UDP-N-acetyl-alpha-D-glucosamine. C120 acts as the Proton donor in catalysis. A 2-(S-cysteinyl)pyruvic acid O-phosphothioketal modification is found at C120. UDP-N-acetyl-alpha-D-glucosamine-binding positions include 125–129 (RPVDQ), D312, and I334.

This sequence belongs to the EPSP synthase family. MurA subfamily.

It localises to the cytoplasm. It carries out the reaction phosphoenolpyruvate + UDP-N-acetyl-alpha-D-glucosamine = UDP-N-acetyl-3-O-(1-carboxyvinyl)-alpha-D-glucosamine + phosphate. It functions in the pathway cell wall biogenesis; peptidoglycan biosynthesis. Functionally, cell wall formation. Adds enolpyruvyl to UDP-N-acetylglucosamine. In Polynucleobacter asymbioticus (strain DSM 18221 / CIP 109841 / QLW-P1DMWA-1) (Polynucleobacter necessarius subsp. asymbioticus), this protein is UDP-N-acetylglucosamine 1-carboxyvinyltransferase.